We begin with the raw amino-acid sequence, 757 residues long: Inhibitor of nuclear factor kappa-B kinase subunit beta (757 aa).

One can recognise a Protein kinase domain in the interval 15 to 300; sequence WEMKERLGTG…DPQYGPNGCF (286 aa). ATP is bound by residues 21-29 and Lys44; that span reads LGTGGFGNV. The Proton acceptor role is filled by Asp145. A Glycyl lysine isopeptide (Lys-Gly) (interchain with G-Cter in ubiquitin) cross-link involves residue Lys163. A Phosphoserine; by TBK1 and PKC/PRKCZ modification is found at Ser177. Cys179 bears the S-nitrosocysteine mark. A Phosphoserine; by TBK1, PKC/PRKCZ and PDPK1 modification is found at Ser181. Pro191 carries the post-translational modification Hydroxyproline. The leucine-zipper stretch occupies residues 458–479; sequence LLRNNSCLSKMKNAMASTAQQL. At Ser670 the chain carries Phosphoserine; by autocatalysis. Ser672 carries the post-translational modification Phosphoserine. A phosphoserine; by autocatalysis mark is found at Ser675, Ser682, Ser689, Ser692, Ser697, Ser705, Ser733, and Ser740. A disordered region spans residues 683–703; the sequence is HPGQLMSQPSSACDSLPESDK. The NEMO-binding stretch occupies residues 737–742; that stretch reads LDWSWL.

This sequence belongs to the protein kinase superfamily. Ser/Thr protein kinase family. I-kappa-B kinase subfamily. As to quaternary structure, component of the I-kappa-B-kinase (IKK) core complex consisting of CHUK, IKBKB and IKBKG; probably four alpha/CHUK-beta/IKBKB dimers are associated with four gamma/IKBKG subunits. The IKK core complex seems to associate with regulatory or adapter proteins to form a IKK-signalosome holo-complex. The IKK complex associates with TERF2IP/RAP1, leading to promote IKK-mediated phosphorylation of RELA/p65. Part of a complex composed of NCOA2, NCOA3, CHUK/IKKA, IKBKB, IKBKG and CREBBP. Part of a 70-90 kDa complex at least consisting of CHUK/IKKA, IKBKB, NFKBIA, RELA, ELP1 and MAP3K14. Found in a membrane raft complex, at least composed of BCL10, CARD11, DPP4 and IKBKB. Interacts with SQSTM1 through PRKCZ or PRKCI. Forms an NGF-induced complex with IKBKB, PRKCI and TRAF6. May interact with MAVS/IPS1. Interacts with NALP2. Interacts with TICAM1. Interacts with FAF1; the interaction disrupts the IKK complex formation. Interacts with ATM. Part of a ternary complex consisting of TANK, IKBKB and IKBKG. Interacts with NIBP; the interaction is direct. Interacts with ARRB1 and ARRB2. Interacts with TRIM21. Interacts with NLRC5; prevents IKBKB phosphorylation and kinase activity. Interacts with PDPK1. Interacts with EIF2AK2/PKR. The phosphorylated form interacts with PPM1A and PPM1B. Interacts with ZNF268 isoform 2; the interaction is further increased in a TNF-alpha-dependent manner. Interacts with IKBKE. Interacts with ZC3H12A. Interacts with AKAP13. Interacts with LRRC14; disrupts IKBKB-IKBKG interaction preventing I-kappa-B-kinase (IKK) core complex formation and leading to a decrease of IKBKB phosphorylation and NF-kappaB activation. Interacts with SASH1. Interacts with ARFIP2. Interacts with FKBP5. Interacts with kinase TBK1; the complex interacts with STAT1, leading to phosphorylation of STAT1 on 'Thr-748' by IKBKB. Post-translationally, upon cytokine stimulation, phosphorylated on Ser-177 and Ser-181 by MEKK1 and/or MAP3K14/NIK as well as TBK1 and PRKCZ; which enhances activity. Phosphorylated by MAP3K7/TAK1 in response to NOD1 and NOD2 signaling, promoting activation and phosphorylation of NF-kappa-B inhibitors, leading to NF-kappa-B activation. Once activated, autophosphorylates on the C-terminal serine cluster; which decreases activity and prevents prolonged activation of the inflammatory response. Phosphorylated by the IKK-related kinases TBK1 and IKBKE, which is associated with reduced CHUK/IKKA and IKBKB activity and NF-kappa-B-dependent gene transcription. Dephosphorylated at Ser-177 and Ser-181 by PPM1A and PPM1B. In terms of processing, ubiquitinated. Monoubiquitination involves TRIM21 that leads to inhibition of Tax-induced NF-kappa-B signaling. 'Ser-163' may not serve as a monoubiquitination site. Ubiquitination on 'Ser-163' may modulate phosphorylation on C-terminal serine residues. Hydroxylated by PHD1/EGLN2, loss of hydroxylation under hypoxic conditions results in activation of NF-kappa-B. In terms of tissue distribution, detected in heart (at protein level). Expressed in liver, kidney and spleen.

It localises to the cytoplasm. It is found in the nucleus. The protein localises to the membrane raft. It carries out the reaction L-seryl-[I-kappa-B protein] + ATP = O-phospho-L-seryl-[I-kappa-B protein] + ADP + H(+). The catalysed reaction is L-seryl-[protein] + ATP = O-phospho-L-seryl-[protein] + ADP + H(+). The enzyme catalyses L-threonyl-[protein] + ATP = O-phospho-L-threonyl-[protein] + ADP + H(+). In terms of biological role, serine kinase that plays an essential role in the NF-kappa-B signaling pathway which is activated by multiple stimuli such as inflammatory cytokines, bacterial or viral products, DNA damages or other cellular stresses. Acts as a part of the canonical IKK complex in the conventional pathway of NF-kappa-B activation. Phosphorylates inhibitors of NF-kappa-B on 2 critical serine residues. These modifications allow polyubiquitination of the inhibitors and subsequent degradation by the proteasome. In turn, free NF-kappa-B is translocated into the nucleus and activates the transcription of hundreds of genes involved in immune response, growth control, or protection against apoptosis. In addition to the NF-kappa-B inhibitors, phosphorylates several other components of the signaling pathway including NEMO/IKBKG, NF-kappa-B subunits RELA and NFKB1, as well as IKK-related kinases TBK1 and IKBKE. IKK-related kinase phosphorylations may prevent the overproduction of inflammatory mediators since they exert a negative regulation on canonical IKKs. Phosphorylates FOXO3, mediating the TNF-dependent inactivation of this pro-apoptotic transcription factor. Also phosphorylates other substrates including NAA10, NCOA3, BCL10 and IRS1. Phosphorylates RIPK1 at 'Ser-25' which represses its kinase activity and consequently prevents TNF-mediated RIPK1-dependent cell death. Phosphorylates the C-terminus of IRF5, stimulating IRF5 homodimerization and translocation into the nucleus. Following bacterial lipopolysaccharide (LPS)-induced TLR4 endocytosis, phosphorylates STAT1 at 'Thr-748' which restricts interferon signaling and anti-inflammatory responses and promotes innate inflammatory responses. IKBKB-mediated phosphorylation of STAT1 at 'Thr-748' promotes binding of STAT1 to the ARID5A promoter, resulting in transcriptional activation of ARID5A and subsequent ARID5A-mediated stabilization of IL6. It also promotes binding of STAT1 to the IL12B promoter and activation of IL12B transcription. The protein is Inhibitor of nuclear factor kappa-B kinase subunit beta (Ikbkb) of Mus musculus (Mouse).